The chain runs to 207 residues: Large ribosomal subunit protein uL4 (207 aa).

A disordered region spans residues 44–77 (LRQGTHKTKGRSEVRGGGRKPWRQKGTGRARQGS). Residues 60–71 (GGRKPWRQKGTG) are compositionally biased toward basic residues.

Belongs to the universal ribosomal protein uL4 family. As to quaternary structure, part of the 50S ribosomal subunit.

In terms of biological role, one of the primary rRNA binding proteins, this protein initially binds near the 5'-end of the 23S rRNA. It is important during the early stages of 50S assembly. It makes multiple contacts with different domains of the 23S rRNA in the assembled 50S subunit and ribosome. Forms part of the polypeptide exit tunnel. In Shouchella clausii (strain KSM-K16) (Alkalihalobacillus clausii), this protein is Large ribosomal subunit protein uL4.